The following is a 582-amino-acid chain: MKRSMYAGRVREEHIGTTITLKGWVSRRRDLGGLIFIDLRDREGVMQLVINPEEVSSDVMATAERLRSEYVIEVEGFVEARQQANDKLATGMVELKVSALTILNTAKTTPFEIKDDAEVSDDTRLRYRYLDLRRPEMLENFKLRAKVTHSIRNYLDDLEFIDVETPMLTKSTPEGARDYLVPSRVSQGHFYALPQSPQITKQLLMNAGFDRYYQIVKCFRDEDLRGDRQPEFTQVDLETSFLSEQEIQDIVEGMIAKVMKETKEIDVTLPFPRMSYDVAMNSYGSDKPDTRFEMLLQDLTVTVKGIDFKVFSEAPAVKAIVVKGNADRYSRKDIDKLTEFAKQFGAKGLAWVKVTDGQFSGPVAKFLTAIETELSSQLKLAENDLVLFVADTLEVANNTLGALRNRIAKDLDMIDQSQFNFLWVVDWPMFEWSEEEGRYMSAHHPFTLPTPESAHELEGDLAKVRAIAYDIVLNGYELGGGSLRINQKEMQERMFKALGFTADEANDQFGFLLEAMDYGFPPHGGLAIGLDRFVMLLAEKDNIREVIAFPKNNKASDPMTQAPSLVSENQLEELSLQIESHD.

Residue E174 coordinates L-aspartate. The interval Q198–K201 is aspartate. Position 220 (R220) interacts with L-aspartate. ATP contacts are provided by residues R220–E222 and Q229. An L-aspartate-binding site is contributed by H443. E477 is an ATP binding site. R484 provides a ligand contact to L-aspartate. G529–R532 is a binding site for ATP.

This sequence belongs to the class-II aminoacyl-tRNA synthetase family. Type 1 subfamily. In terms of assembly, homodimer.

The protein localises to the cytoplasm. The catalysed reaction is tRNA(Asp) + L-aspartate + ATP = L-aspartyl-tRNA(Asp) + AMP + diphosphate. Its function is as follows. Catalyzes the attachment of L-aspartate to tRNA(Asp) in a two-step reaction: L-aspartate is first activated by ATP to form Asp-AMP and then transferred to the acceptor end of tRNA(Asp). In Streptococcus pyogenes serotype M5 (strain Manfredo), this protein is Aspartate--tRNA ligase.